Reading from the N-terminus, the 263-residue chain is Eukaryotic translation initiation factor 3 subunit J-B (263 aa).

Composition is skewed to acidic residues over residues 1–13 (MADS…DNFE) and 30–50 (EGED…EEKE). Disordered stretches follow at residues 1 to 75 (MADS…DKIK) and 214 to 235 (KQKQ…VPGG). Positions 30–127 (EGEDEEEDVK…EADMELAREA (98 aa)) form a coiled coil. The segment covering 51–75 (EEKKVEQKIAEVKPPEKKKLSDKIK) has biased composition (basic and acidic residues).

This sequence belongs to the eIF-3 subunit J family. Component of the eukaryotic translation initiation factor 3 (eIF-3) complex, which is composed of 13 subunits: eif3a, eif3b, eif3c, eif3d, eif3e, eif3f, eif3g, eif3h, eif3i, eif3j, eif3k, eif3l and eif3m.

Its subcellular location is the cytoplasm. Its function is as follows. Component of the eukaryotic translation initiation factor 3 (eIF-3) complex, which is involved in protein synthesis of a specialized repertoire of mRNAs and, together with other initiation factors, stimulates binding of mRNA and methionyl-tRNAi to the 40S ribosome. The eIF-3 complex specifically targets and initiates translation of a subset of mRNAs involved in cell proliferation. This chain is Eukaryotic translation initiation factor 3 subunit J-B (eif3jb), found in Danio rerio (Zebrafish).